Reading from the N-terminus, the 345-residue chain is MLRDTHLALQRNWQSLRKPEKLDIEPGADDTRVATIIAEPLERGFGLTLGNALRRVLLSSLHGAAVTSVRIDGVLHEFSSIAGVREDVTDIVLNIKQIAVRMHGDGPKRMTVSATGPCEVTAGMIQTGHDIEVMNPELVICTLDDGATLGMEFTVESGRGYVPAAANRPEDAPIGLIPVDSIYSPVRRVSYRVEPTRVGQVTDYDRLILNIETNGAVTPEDAVALAARILQDQLGMFINFEEPQRLRAEEPRPELPFNPNLLRKVDELELSVRSANCLKNDNIVYIGDLVQKSEQEMLRTPNFGRKSLNEIKEVLSAMGLGLGMVVQDWPPENIEELVKRSDNPF.

The alpha N-terminal domain (alpha-NTD) stretch occupies residues 1 to 241 (MLRDTHLALQ…DQLGMFINFE (241 aa)). The segment at 257–345 (FNPNLLRKVD…ELVKRSDNPF (89 aa)) is alpha C-terminal domain (alpha-CTD).

It belongs to the RNA polymerase alpha chain family. In terms of assembly, homodimer. The RNAP catalytic core consists of 2 alpha, 1 beta, 1 beta' and 1 omega subunit. When a sigma factor is associated with the core the holoenzyme is formed, which can initiate transcription.

It carries out the reaction RNA(n) + a ribonucleoside 5'-triphosphate = RNA(n+1) + diphosphate. Its function is as follows. DNA-dependent RNA polymerase catalyzes the transcription of DNA into RNA using the four ribonucleoside triphosphates as substrates. The sequence is that of DNA-directed RNA polymerase subunit alpha from Acidiphilium cryptum (strain JF-5).